The sequence spans 97 residues: MALKATALFAMLGLSFVLSPSIEANVDPHFDKFMESGIRHVYMLFENKSVESSEQFYSFMRTTYKNDPCSSDFECIERGAEMAQSYARIMNIKLETE.

An N-terminal signal peptide occupies residues 1 to 24; sequence MALKATALFAMLGLSFVLSPSIEA. C69 and C75 are joined by a disulfide.

This sequence belongs to the T4likevirus antiholin family. In terms of assembly, homotetramer; in free-form. Homomultimer. Heterotetramer composed of 2 holin and 2 antiholin. The holin-antiholin complex binds dsDNA. Interacts (via C-terminus) with holin (via C-terminus); this interaction blocks the holin homomultimerization and delays the host cell lysis. Disulfide bond is required for functionality.

It localises to the host periplasm. In terms of biological role, involved in lysis inhibition. Senses superinfections and inhibits the holin, thereby delaying the host cell lysis timing. The genomic DNA from the superinfecting phage bound to the complex holin-antiholin probably serves as a signal for the lysis inhibition and blocks the holin multimerization. In Enterobacteria phage T4 (Bacteriophage T4), this protein is Antiholin (rI).